The primary structure comprises 205 residues: Polyamine-modulated factor 1 (205 aa).

The disordered stretch occupies residues 1-30 (MAEASSANLGSGCEEKRHEGSSSESVPPGT). The stretch at 141–193 (FLQQRDTLRRHVQKQEAENQQLADAVLAGRRQVEELQLQVQAQQQAWQALHRE) forms a coiled coil.

Component of the MIS12 complex composed of MIS12, DSN1, NSL1 and PMF1. Interacts with COPS7A. Interacts via its coiled-coil domain with the leucine-zipper domain of NFE2L2. The interaction with NFE2L2 is required for the transcriptional regulation of SSAT. Highest levels of expression in heart and skeletal muscle, with significant levels expressed in kidney and liver.

The protein resides in the nucleus. It is found in the chromosome. It localises to the centromere. The protein localises to the kinetochore. In terms of biological role, part of the MIS12 complex which is required for normal chromosome alignment and segregation and kinetochore formation during mitosis. May act as a cotranscription partner of NFE2L2 involved in regulation of polyamine-induced transcription of SSAT. This chain is Polyamine-modulated factor 1, found in Homo sapiens (Human).